The primary structure comprises 422 residues: Terminase, large subunit (422 aa).

The segment at 1 to 198 is ATPase activity; it reads MKKVRLSEKF…PANTFVDHST (198 aa). Residues 33-40 carry the Walker A motif motif; sequence GGRGSAKS. The Walker B motif signature appears at 130-135; sequence GMWIEE. The active-site For ATPase activity is the Glu-135. A nuclease activity and binding to the portal protein region spans residues 232 to 422; it reads ALGSGVVPFE…MKKGGVSLWG (191 aa). Residues Asp-266, Asp-321, His-400, and Asp-403 each coordinate Mn(2+).

In terms of assembly, monomer. Interacts with the terminase small subunit; the active complex is probably composed of two decameric ring-shaped terminase small subunit and two monomeric terminase large subunit. Interacts with the portal protein. Mn(2+) serves as cofactor. It depends on Mg(2+) as a cofactor.

Functionally, the terminase large subunit acts as an ATP driven molecular motor necessary for viral DNA translocation into empty capsids and as an endonuclease that cuts the viral genome to initiate and to end a packaging reaction. The terminase lies at a unique vertex of the procapsid and is composed of two subunits, a small terminase subunit involved in viral DNA recognition (packaging sequence), and a large terminase subunit possessing endonucleolytic and ATPase activities. Both terminase subunits heterooligomerize and are docked on the portal protein to form the packaging machine. The terminase large subunit exhibits endonuclease activity and cleaves the viral genome concatemer once the capsid is full (headful packaging). Once the capsid is packaged with the DNA, the terminase complex is substituted by the adapter (gp15) and the stopper protein (gp16) that form the connector. The sequence is that of Terminase, large subunit (2) from Bacillus phage SPP1 (Bacteriophage SPP1).